A 552-amino-acid chain; its full sequence is Arginine--tRNA ligase (552 aa).

The 'HIGH' region signature appears at 123-133 (ANPTGPLTIGR).

The protein belongs to the class-I aminoacyl-tRNA synthetase family. In terms of assembly, monomer.

The protein localises to the cytoplasm. It carries out the reaction tRNA(Arg) + L-arginine + ATP = L-arginyl-tRNA(Arg) + AMP + diphosphate. In Chlorobium phaeovibrioides (strain DSM 265 / 1930) (Prosthecochloris vibrioformis (strain DSM 265)), this protein is Arginine--tRNA ligase.